Reading from the N-terminus, the 157-residue chain is Protein Smg homolog (157 aa).

The protein belongs to the Smg family.

In Shewanella sediminis (strain HAW-EB3), this protein is Protein Smg homolog.